The following is a 520-amino-acid chain: GMP synthase [glutamine-hydrolyzing] (520 aa).

In terms of domain architecture, Glutamine amidotransferase type-1 spans R9–D202. The active-site Nucleophile is C86. Catalysis depends on residues H176 and E178. Residues W203 to R395 form the GMPS ATP-PPase domain. S230 to S236 contributes to the ATP binding site.

In terms of assembly, homodimer.

It carries out the reaction XMP + L-glutamine + ATP + H2O = GMP + L-glutamate + AMP + diphosphate + 2 H(+). Its pathway is purine metabolism; GMP biosynthesis; GMP from XMP (L-Gln route): step 1/1. In terms of biological role, catalyzes the synthesis of GMP from XMP. The protein is GMP synthase [glutamine-hydrolyzing] of Caulobacter vibrioides (strain ATCC 19089 / CIP 103742 / CB 15) (Caulobacter crescentus).